The following is a 358-amino-acid chain: Cytoplasmic dynein 2 light intermediate chain 1 (358 aa).

Disordered regions lie at residues 1–35 and 307–358; these read MPKV…EDAH and ESTR…ALDP. The span at 24–33 shows a compositional bias: acidic residues; the sequence is TDEEEAEEED. Composition is skewed to basic and acidic residues over residues 307–320 and 333–349; these read ESTR…DPVK and RAQK…EQAK.

This sequence belongs to the dynein light intermediate chain family. In terms of assembly, light intermediate chain of the cytoplasmic dynein complex 2, a multisubunit complex composed at least of eleven different proteins. The cytoplasmic dynein 2 complex consists of two catalytic heavy chains (HCs) and a number of non-catalytic subunits presented by intermediate chains (ICs), light intermediate chains (LICs) and light chains (LCs). Among them, a heavy chain (DYNC2H1), two intermediate chains (DYNC2I2 and DYNC2I1), a light intermediate chain (DYNC2LI1), and a light chain (DYNLT2B) are unique to the dynein-2 complex, but a subset of light chains are also shared by dynein-1 and dynein-2 complexes. Dynein-2 complex is built around two copies of cytoplasmic dynein 2 heavy chain 1 (DYNC2H1). The C-terminal region forms the motor domain, which converts the energy from ATP hydrolysis into movement. Its N-terminal region forms the tail, an extended structure that binds the other subunits and holds the two heavy chains in a homodimer.

Its subcellular location is the cytoplasm. The protein localises to the cell projection. It localises to the cilium. The protein resides in the cytoskeleton. It is found in the cilium basal body. Its subcellular location is the cilium axoneme. The protein localises to the microtubule organizing center. It localises to the centrosome. Its function is as follows. Acts as one of several non-catalytic accessory components of the cytoplasmic dynein 2 complex (dynein-2 complex), a motor protein complex that drives the movement of cargos along microtubules within cilia and flagella in concert with the intraflagellar transport (IFT) system, facilitating the assembly of these organelles. The sequence is that of Cytoplasmic dynein 2 light intermediate chain 1 (dync2li1) from Danio rerio (Zebrafish).